The primary structure comprises 429 residues: UDP-N-acetylglucosamine 1-carboxyvinyltransferase (429 aa).

22–23 (KN) serves as a coordination point for phosphoenolpyruvate. Arg-93 serves as a coordination point for UDP-N-acetyl-alpha-D-glucosamine. The active-site Proton donor is Cys-117. Residue Cys-117 is modified to 2-(S-cysteinyl)pyruvic acid O-phosphothioketal. UDP-N-acetyl-alpha-D-glucosamine is bound by residues 122–126 (RPVDL), Asp-307, and Val-329.

This sequence belongs to the EPSP synthase family. MurA subfamily.

Its subcellular location is the cytoplasm. The catalysed reaction is phosphoenolpyruvate + UDP-N-acetyl-alpha-D-glucosamine = UDP-N-acetyl-3-O-(1-carboxyvinyl)-alpha-D-glucosamine + phosphate. Its pathway is cell wall biogenesis; peptidoglycan biosynthesis. Cell wall formation. Adds enolpyruvyl to UDP-N-acetylglucosamine. This Chloroherpeton thalassium (strain ATCC 35110 / GB-78) protein is UDP-N-acetylglucosamine 1-carboxyvinyltransferase.